We begin with the raw amino-acid sequence, 166 residues long: MNYTSYILAFQLCVILCSSGCNCQAMFFKEIENLKEYFNASNPDVSDGGSLFVDILKKWREESDKTIIQSQIVSFYLKLFDNFKDNQIIQRSMDTIKEDMLGKFLNSSTSKREDFLKLIQIPVNDLQVQRKAINELIKVMNDLSPRSNLRKRKRSQNLFRGRRASK.

The N-terminal stretch at 1-23 is a signal peptide; the sequence is MNYTSYILAFQLCVILCSSGCNC. A Pyrrolidone carboxylic acid modification is found at Q24. N-linked (GlcNAc...) asparagine glycosylation is found at N39 and N106.

This sequence belongs to the type II (or gamma) interferon family. As to quaternary structure, homodimer. Interacts with IFNGR1 (via extracellular domain); this interaction promotes IFNGR1 dimerization. In terms of tissue distribution, released primarily from activated T lymphocytes.

It is found in the secreted. Its function is as follows. Type II interferon produced by immune cells such as T-cells and NK cells that plays crucial roles in antimicrobial, antiviral, and antitumor responses by activating effector immune cells and enhancing antigen presentation. Primarily signals through the JAK-STAT pathway after interaction with its receptor IFNGR1 to affect gene regulation. Upon IFNG binding, IFNGR1 intracellular domain opens out to allow association of downstream signaling components JAK2, JAK1 and STAT1, leading to STAT1 activation, nuclear translocation and transcription of IFNG-regulated genes. Many of the induced genes are transcription factors such as IRF1 that are able to further drive regulation of a next wave of transcription. Plays a role in class I antigen presentation pathway by inducing a replacement of catalytic proteasome subunits with immunoproteasome subunits. In turn, increases the quantity, quality, and repertoire of peptides for class I MHC loading. Increases the efficiency of peptide generation also by inducing the expression of activator PA28 that associates with the proteasome and alters its proteolytic cleavage preference. Up-regulates as well MHC II complexes on the cell surface by promoting expression of several key molecules such as cathepsins B/CTSB, H/CTSH, and L/CTSL. Participates in the regulation of hematopoietic stem cells during development and under homeostatic conditions by affecting their development, quiescence, and differentiation. The sequence is that of Interferon gamma (IFNG) from Canis lupus familiaris (Dog).